The chain runs to 399 residues: MIIKPRVRGFICVTAHPAGCEANVKKQIDYVTAEGPIANGPKRVLVIGASTGYGLAARITAAFGCGADTLGVFFERPGEEGKPGTSGWYNSAAFHKFAEQKGLYAKSINGDAFSDEIKRLTIEAIKQDLGQVDQVIYSLASPRRTHPKTGEVFNSTLKPIGHEVKFRGLDTDKEVIKEAVLQPATQEEIDNTVAVMGGEDWQMWIDALLEAGVLAEGAQTTAFTYLGEKITHDIYWNGSIGAAKKDLDQKVLAIRDSLSAHGGGDARVSVLKAVVTQASSAIPMMPLYLSLLFKVMKEKGTHEGCIEQVYSLYKDSLCGSAPHMDQDGRLRADYKELDPEVQNQVQQLWDQVTNDNIYQLTDFTGYKTEFLNLFGFAIDGVDYEADVNPAVKIPNLIQG.

NAD(+)-binding positions include 48 to 53 (GASTGY), 74 to 75 (FE), 111 to 112 (DA), and 139 to 140 (LA). Tyr-225 contributes to the substrate binding site. The active-site Proton donor is the Tyr-235. Residues Lys-244 and 274-276 (VVT) contribute to the NAD(+) site.

The protein belongs to the TER reductase family. Monomer.

The enzyme catalyses a 2,3-saturated acyl-[ACP] + NAD(+) = a (2E)-enoyl-[ACP] + NADH + H(+). It functions in the pathway lipid metabolism; fatty acid biosynthesis. In terms of biological role, involved in the final reduction of the elongation cycle of fatty acid synthesis (FAS II). Catalyzes the reduction of a carbon-carbon double bond in an enoyl moiety that is covalently linked to an acyl carrier protein (ACP). This is Enoyl-[acyl-carrier-protein] reductase [NADH] from Yersinia enterocolitica serotype O:8 / biotype 1B (strain NCTC 13174 / 8081).